Consider the following 393-residue polypeptide: Acetylornithine aminotransferase 1 (393 aa).

Arg131 contributes to the N(2)-acetyl-L-ornithine binding site. 215-218 (DEVQ) lines the pyridoxal 5'-phosphate pocket. The residue at position 244 (Lys244) is an N6-(pyridoxal phosphate)lysine. Thr272 is a N(2)-acetyl-L-ornithine binding site. Thr273 is a binding site for pyridoxal 5'-phosphate.

The protein belongs to the class-III pyridoxal-phosphate-dependent aminotransferase family. ArgD subfamily. As to quaternary structure, homodimer. Pyridoxal 5'-phosphate serves as cofactor.

The protein localises to the cytoplasm. It carries out the reaction N(2)-acetyl-L-ornithine + 2-oxoglutarate = N-acetyl-L-glutamate 5-semialdehyde + L-glutamate. The protein operates within amino-acid biosynthesis; L-arginine biosynthesis; N(2)-acetyl-L-ornithine from L-glutamate: step 4/4. In Bordetella pertussis (strain Tohama I / ATCC BAA-589 / NCTC 13251), this protein is Acetylornithine aminotransferase 1.